Here is a 1167-residue protein sequence, read N- to C-terminus: DNA-directed RNA polymerase subunit beta (1167 aa).

This sequence belongs to the RNA polymerase beta chain family. In terms of assembly, the RNAP catalytic core consists of 2 alpha, 1 beta, 1 beta' and 1 omega subunit. When a sigma factor is associated with the core the holoenzyme is formed, which can initiate transcription.

It catalyses the reaction RNA(n) + a ribonucleoside 5'-triphosphate = RNA(n+1) + diphosphate. Functionally, DNA-dependent RNA polymerase catalyzes the transcription of DNA into RNA using the four ribonucleoside triphosphates as substrates. The chain is DNA-directed RNA polymerase subunit beta from Treponema denticola (strain ATCC 35405 / DSM 14222 / CIP 103919 / JCM 8153 / KCTC 15104).